The following is a 237-amino-acid chain: tRNA (guanine-N(7)-)-methyltransferase (237 aa).

Glutamate 65, glutamate 90, aspartate 117, and aspartate 140 together coordinate S-adenosyl-L-methionine. Residue aspartate 140 is part of the active site. Residues lysine 144, aspartate 176, and 212 to 215 contribute to the substrate site; that span reads TKFE. The segment at 197-217 is disordered; that stretch reads TCGPRQFSPRGERPETKFERR. A compositionally biased stretch (basic and acidic residues) spans 206 to 217; the sequence is RGERPETKFERR.

Belongs to the class I-like SAM-binding methyltransferase superfamily. TrmB family.

It carries out the reaction guanosine(46) in tRNA + S-adenosyl-L-methionine = N(7)-methylguanosine(46) in tRNA + S-adenosyl-L-homocysteine. It participates in tRNA modification; N(7)-methylguanine-tRNA biosynthesis. In terms of biological role, catalyzes the formation of N(7)-methylguanine at position 46 (m7G46) in tRNA. In Alkalilimnicola ehrlichii (strain ATCC BAA-1101 / DSM 17681 / MLHE-1), this protein is tRNA (guanine-N(7)-)-methyltransferase.